Reading from the N-terminus, the 953-residue chain is Isoleucine--tRNA ligase (953 aa).

Residues 61-71 (PYANGALHIGH) carry the 'HIGH' region motif. Glutamate 564 is a binding site for L-isoleucyl-5'-AMP. The short motif at 605-609 (KMSKS) is the 'KMSKS' region element. Lysine 608 contributes to the ATP binding site. Zn(2+) is bound by residues cysteine 922, cysteine 925, cysteine 942, and cysteine 945.

The protein belongs to the class-I aminoacyl-tRNA synthetase family. IleS type 1 subfamily. Monomer. The cofactor is Zn(2+).

Its subcellular location is the cytoplasm. It carries out the reaction tRNA(Ile) + L-isoleucine + ATP = L-isoleucyl-tRNA(Ile) + AMP + diphosphate. Functionally, catalyzes the attachment of isoleucine to tRNA(Ile). As IleRS can inadvertently accommodate and process structurally similar amino acids such as valine, to avoid such errors it has two additional distinct tRNA(Ile)-dependent editing activities. One activity is designated as 'pretransfer' editing and involves the hydrolysis of activated Val-AMP. The other activity is designated 'posttransfer' editing and involves deacylation of mischarged Val-tRNA(Ile). In Thermosynechococcus vestitus (strain NIES-2133 / IAM M-273 / BP-1), this protein is Isoleucine--tRNA ligase.